A 340-amino-acid polypeptide reads, in one-letter code: GTP 3',8-cyclase (340 aa).

The 222-residue stretch at K8–V229 folds into the Radical SAM core domain. R17 serves as a coordination point for GTP. The [4Fe-4S] cluster site is built by C24 and C28. Y30 is an S-adenosyl-L-methionine binding site. C31 contacts [4Fe-4S] cluster. A GTP-binding site is contributed by R71. G75 is a binding site for S-adenosyl-L-methionine. T102 contacts GTP. Residue S126 participates in S-adenosyl-L-methionine binding. K163 contacts GTP. An S-adenosyl-L-methionine-binding site is contributed by M197. [4Fe-4S] cluster-binding residues include C261 and C264. R266–R268 serves as a coordination point for GTP. C278 lines the [4Fe-4S] cluster pocket.

The protein belongs to the radical SAM superfamily. MoaA family. As to quaternary structure, monomer and homodimer. Requires [4Fe-4S] cluster as cofactor.

It carries out the reaction GTP + AH2 + S-adenosyl-L-methionine = (8S)-3',8-cyclo-7,8-dihydroguanosine 5'-triphosphate + 5'-deoxyadenosine + L-methionine + A + H(+). Its pathway is cofactor biosynthesis; molybdopterin biosynthesis. Functionally, catalyzes the cyclization of GTP to (8S)-3',8-cyclo-7,8-dihydroguanosine 5'-triphosphate. The sequence is that of GTP 3',8-cyclase from Staphylococcus epidermidis (strain ATCC 35984 / DSM 28319 / BCRC 17069 / CCUG 31568 / BM 3577 / RP62A).